A 246-amino-acid chain; its full sequence is Bis(5'-nucleosyl)-tetraphosphatase PrpE [asymmetrical] (246 aa).

It belongs to the PrpE family. Ni(2+) is required as a cofactor.

The catalysed reaction is P(1),P(4)-bis(5'-guanosyl) tetraphosphate + H2O = GMP + GTP + 2 H(+). Functionally, asymmetrically hydrolyzes Ap4p to yield AMP and ATP. In Bacillus thuringiensis (strain Al Hakam), this protein is Bis(5'-nucleosyl)-tetraphosphatase PrpE [asymmetrical].